Reading from the N-terminus, the 506-residue chain is Galactose/methyl galactoside import ATP-binding protein MglA (506 aa).

ABC transporter domains are found at residues 14–249 and 260–506; these read LTMT…VGRE and TPKE…AKYL. Residue 46–53 coordinates ATP; the sequence is GENGAGKS.

This sequence belongs to the ABC transporter superfamily. Galactose/methyl galactoside importer (TC 3.A.1.2.3) family. As to quaternary structure, the complex is composed of one ATP-binding protein (MglA), two transmembrane proteins (MglC) and a solute-binding protein (MglB).

The protein resides in the cell inner membrane. It carries out the reaction D-galactose(out) + ATP + H2O = D-galactose(in) + ADP + phosphate + H(+). The enzyme catalyses methyl beta-D-galactoside(out) + ATP + H2O = methyl beta-D-galactoside(in) + ADP + phosphate + H(+). Functionally, part of the ABC transporter complex MglABC involved in galactose/methyl galactoside import. Responsible for energy coupling to the transport system. In Pasteurella multocida (strain Pm70), this protein is Galactose/methyl galactoside import ATP-binding protein MglA.